We begin with the raw amino-acid sequence, 198 residues long: MKVAVVGVQGDVEEHVLATKRALKRLGIDGEVVATRRRGVVSRSDAVILPGGESTTISKLIFSDGIADEILQLAEEGKPVMGTCAGLILLSKYGDEQVEKTNTKLLGLLDAKVKRNAFGRQRESFQVPLDVKYVGKFDAVFIRAPAITEVGKDVEVLATFENLIVAARQKNVLGLAFHPELTDDTRIHEFFLKLGETS.

An L-glutamine-binding site is contributed by 52–54 (GES). C84 serves as the catalytic Nucleophile. Residues R115 and 142 to 143 (IR) each bind L-glutamine. Catalysis depends on charge relay system residues H178 and E180.

Belongs to the glutaminase PdxT/SNO family. As to quaternary structure, in the presence of PdxS, forms a dodecamer of heterodimers. Only shows activity in the heterodimer.

It catalyses the reaction aldehydo-D-ribose 5-phosphate + D-glyceraldehyde 3-phosphate + L-glutamine = pyridoxal 5'-phosphate + L-glutamate + phosphate + 3 H2O + H(+). It carries out the reaction L-glutamine + H2O = L-glutamate + NH4(+). Its pathway is cofactor biosynthesis; pyridoxal 5'-phosphate biosynthesis. In terms of biological role, catalyzes the hydrolysis of glutamine to glutamate and ammonia as part of the biosynthesis of pyridoxal 5'-phosphate. The resulting ammonia molecule is channeled to the active site of PdxS. The chain is Pyridoxal 5'-phosphate synthase subunit PdxT from Archaeoglobus fulgidus (strain ATCC 49558 / DSM 4304 / JCM 9628 / NBRC 100126 / VC-16).